The primary structure comprises 230 residues: 2,3-bisphosphoglycerate-dependent phosphoglycerate mutase (230 aa).

Residues 10-17, 23-24, Arg62, 89-92, Lys100, 116-117, and 185-186 each bind substrate; these read RHGQSKWN, TG, ERHY, RR, and GN. His11 serves as the catalytic Tele-phosphohistidine intermediate. The Proton donor/acceptor role is filled by Glu89.

The protein belongs to the phosphoglycerate mutase family. BPG-dependent PGAM subfamily. Homodimer.

The catalysed reaction is (2R)-2-phosphoglycerate = (2R)-3-phosphoglycerate. The protein operates within carbohydrate degradation; glycolysis; pyruvate from D-glyceraldehyde 3-phosphate: step 3/5. Catalyzes the interconversion of 2-phosphoglycerate and 3-phosphoglycerate. This is 2,3-bisphosphoglycerate-dependent phosphoglycerate mutase from Buchnera aphidicola subsp. Schizaphis graminum (strain Sg).